The sequence spans 156 residues: ATP synthase subunit b (156 aa).

Residues 12 to 32 (LAFAIFVWFCMKLVWPPITAA) traverse the membrane as a helical segment.

This sequence belongs to the ATPase B chain family. In terms of assembly, F-type ATPases have 2 components, F(1) - the catalytic core - and F(0) - the membrane proton channel. F(1) has five subunits: alpha(3), beta(3), gamma(1), delta(1), epsilon(1). F(0) has three main subunits: a(1), b(2) and c(10-14). The alpha and beta chains form an alternating ring which encloses part of the gamma chain. F(1) is attached to F(0) by a central stalk formed by the gamma and epsilon chains, while a peripheral stalk is formed by the delta and b chains.

The protein localises to the cell inner membrane. Its function is as follows. F(1)F(0) ATP synthase produces ATP from ADP in the presence of a proton or sodium gradient. F-type ATPases consist of two structural domains, F(1) containing the extramembraneous catalytic core and F(0) containing the membrane proton channel, linked together by a central stalk and a peripheral stalk. During catalysis, ATP synthesis in the catalytic domain of F(1) is coupled via a rotary mechanism of the central stalk subunits to proton translocation. Component of the F(0) channel, it forms part of the peripheral stalk, linking F(1) to F(0). This chain is ATP synthase subunit b, found in Stutzerimonas stutzeri (strain A1501) (Pseudomonas stutzeri).